The following is a 211-amino-acid chain: Large ribosomal subunit protein uL4 (211 aa).

Residues 48 to 89 (KRAGTASTKTRVEVRGGGAKPWRQKGTGRARAGSRTSPLWRG) form a disordered region.

The protein belongs to the universal ribosomal protein uL4 family. In terms of assembly, part of the 50S ribosomal subunit.

In terms of biological role, one of the primary rRNA binding proteins, this protein initially binds near the 5'-end of the 23S rRNA. It is important during the early stages of 50S assembly. It makes multiple contacts with different domains of the 23S rRNA in the assembled 50S subunit and ribosome. Forms part of the polypeptide exit tunnel. In Desulfotalea psychrophila (strain LSv54 / DSM 12343), this protein is Large ribosomal subunit protein uL4.